An 874-amino-acid polypeptide reads, in one-letter code: MKAAEIREKFLKFFESKGHTIVRSSSLVPGNDPTLLFTNSGMVQFKDVFLGAESRPYSRATTAQRSVRAGGKHNDLENVGYTARHHTFFEMLGNFSFGDYFKRDAIHYAWELLTGVYQLPKEKLWVTVYQEDDEAYDIWAKEVGVPAERIIRIGDNKGARYASDNFWQMADTGPCGPCSEIFYDHGPDVWGGPPGSPEEDGDRYIEIWNLVFMQFNRDAQGNMTPLPKQCVDTGMGLERIAAVLQHVHSNYEIDLFQALIKAAARETNIDDLSNNSLKVVADHIRACSFLIVDGVIPGNEGRGYVLRRIVRRAIRHGYKLGRKGSFFHKLVADLVAQMGGAYPELKDAEQRVTHVLRQEEERFFETIEHGMSILEGALADLDSKGGKTLDGEVAFKLHDTYGFPLDLTADVCRERGVTVDEPAFDEAMARQREQARAAGKFKMAQGLDYTGAKTTFHGYEEIVFDDARVTALYVDGASVNEVTKGQQAVVVLDHTPFYAESGGQVGDQGVLANASIRFGVVDTLKVQADVVGHHGTLEQGTLKVGDVVKAEIDAVRRARTARNHSATHLMHKALREVLGGHVQQKGSLVDADKTRFDFAHNAPMTDEQIRRVEEIVNAEVLANAPGIVRVMAYDEAVKGGAMALFGEKYGDEVRVLDLGFSRELCGGTHVNRTGDIGLFKIVMEGGVAAGIRRVEAITGDNAVRFVQELDARIHAAAAALKAQPSELTQRISMVQDQVKALEKELGALKSKLASSQGDELASQAIDVSGVQVLAATLEGADVKTLRETVDKLKDKLKSAAIVLASVEGGKVSLIAGVTADTSKKVKAGELVNFVAQQVGGKGGGRPDMAQAGGTEPANLPAALAGVKGWVEAQL.

Zn(2+) contacts are provided by H564, H568, C665, and H669.

Belongs to the class-II aminoacyl-tRNA synthetase family. It depends on Zn(2+) as a cofactor.

The protein resides in the cytoplasm. It carries out the reaction tRNA(Ala) + L-alanine + ATP = L-alanyl-tRNA(Ala) + AMP + diphosphate. Functionally, catalyzes the attachment of alanine to tRNA(Ala) in a two-step reaction: alanine is first activated by ATP to form Ala-AMP and then transferred to the acceptor end of tRNA(Ala). Also edits incorrectly charged Ser-tRNA(Ala) and Gly-tRNA(Ala) via its editing domain. This Paraburkholderia phymatum (strain DSM 17167 / CIP 108236 / LMG 21445 / STM815) (Burkholderia phymatum) protein is Alanine--tRNA ligase.